Consider the following 137-residue polypeptide: Chaperone protein YscB (137 aa).

As to quaternary structure, interacts with SycN to form a complex which specifically binds to YopN.

The protein resides in the cytoplasm. It is found in the cell inner membrane. Functionally, functions as a specific chaperone for YopN. It could facilitate the secretion and the subsequent translocation of YopN. The polypeptide is Chaperone protein YscB (yscB) (Yersinia enterocolitica).